We begin with the raw amino-acid sequence, 276 residues long: Dermonecrotic toxin LlSicTox-alphaIV1i (276 aa).

His-5 is an active-site residue. Residues Glu-25 and Asp-27 each contribute to the Mg(2+) site. The active-site Nucleophile is His-41. Cystine bridges form between Cys-45-Cys-51 and Cys-47-Cys-193. Residue Asp-85 participates in Mg(2+) binding.

Belongs to the arthropod phospholipase D family. Class II subfamily. Mg(2+) serves as cofactor. In terms of tissue distribution, expressed by the venom gland.

The protein localises to the secreted. It catalyses the reaction an N-(acyl)-sphingosylphosphocholine = an N-(acyl)-sphingosyl-1,3-cyclic phosphate + choline. The enzyme catalyses an N-(acyl)-sphingosylphosphoethanolamine = an N-(acyl)-sphingosyl-1,3-cyclic phosphate + ethanolamine. The catalysed reaction is a 1-acyl-sn-glycero-3-phosphocholine = a 1-acyl-sn-glycero-2,3-cyclic phosphate + choline. It carries out the reaction a 1-acyl-sn-glycero-3-phosphoethanolamine = a 1-acyl-sn-glycero-2,3-cyclic phosphate + ethanolamine. In terms of biological role, dermonecrotic toxins cleave the phosphodiester linkage between the phosphate and headgroup of certain phospholipids (sphingolipid and lysolipid substrates), forming an alcohol (often choline) and a cyclic phosphate. This toxin acts on sphingomyelin (SM). It may also act on ceramide phosphoethanolamine (CPE), lysophosphatidylcholine (LPC) and lysophosphatidylethanolamine (LPE), but not on lysophosphatidylserine (LPS), and lysophosphatidylglycerol (LPG). It acts by transphosphatidylation, releasing exclusively cyclic phosphate products as second products. Induces dermonecrosis, hemolysis, increased vascular permeability, edema, inflammatory response, and platelet aggregation. In Loxosceles laeta (South American recluse spider), this protein is Dermonecrotic toxin LlSicTox-alphaIV1i.